A 358-amino-acid polypeptide reads, in one-letter code: tRNA-specific 2-thiouridylase MnmA (358 aa).

Residues Ala-8–Ser-15 and Met-35 each bind ATP. The segment at Asn-95 to Asp-97 is interaction with target base in tRNA. Cys-100 acts as the Nucleophile in catalysis. A disulfide bridge connects residues Cys-100 and Cys-194. Gly-124 provides a ligand contact to ATP. The interval Lys-144–Gln-146 is interaction with tRNA. Catalysis depends on Cys-194, which acts as the Cysteine persulfide intermediate. Positions Arg-301–Tyr-302 are interaction with tRNA.

The protein belongs to the MnmA/TRMU family.

Its subcellular location is the cytoplasm. It catalyses the reaction S-sulfanyl-L-cysteinyl-[protein] + uridine(34) in tRNA + AH2 + ATP = 2-thiouridine(34) in tRNA + L-cysteinyl-[protein] + A + AMP + diphosphate + H(+). Functionally, catalyzes the 2-thiolation of uridine at the wobble position (U34) of tRNA, leading to the formation of s(2)U34. The sequence is that of tRNA-specific 2-thiouridylase MnmA from Chlamydia trachomatis serovar D (strain ATCC VR-885 / DSM 19411 / UW-3/Cx).